The following is a 223-amino-acid chain: Ribonuclease 3 (223 aa).

Residues 5–127 (LQRLEKKIGY…IIGAIYLDSD (123 aa)) form the RNase III domain. Mg(2+) is bound at residue Glu-40. Residue Asp-44 is part of the active site. Mg(2+)-binding residues include Asp-113 and Glu-116. Residue Glu-116 is part of the active site. The DRBM domain occupies 154 to 223 (DPKTRLQEYL…AADIALGQLN (70 aa)).

This sequence belongs to the ribonuclease III family. As to quaternary structure, homodimer. It depends on Mg(2+) as a cofactor.

It localises to the cytoplasm. The enzyme catalyses Endonucleolytic cleavage to 5'-phosphomonoester.. Digests double-stranded RNA. Involved in the processing of primary rRNA transcript to yield the immediate precursors to the large and small rRNAs (23S and 16S). Processes some mRNAs, and tRNAs when they are encoded in the rRNA operon. Processes pre-crRNA and tracrRNA of type II CRISPR loci if present in the organism. In Aliivibrio fischeri (strain ATCC 700601 / ES114) (Vibrio fischeri), this protein is Ribonuclease 3.